The chain runs to 250 residues: MSISFSNVDFINSTIQSYLNRKLKSYGDPKYAYLIMNKKKPTDVVIISNYPTEWVDIYRNNNYQHIDPVILTAINKISPFSWDDDLVISSKLKFSRIFNLSKDYDIVNGYTFVLHDPGNNLAALSFMIEEHRSEELEEIIQNNKDKLQMLLISAHEKLTSLYREMSRNRNNSKSQEADLFSQRENEILHWASMGKTYQEIALILGITTSTVKFHIGNVVKKLGVLNAKHAIRLGVEMNLIKPVGPAKARS.

The region spanning Lys-173 to Asn-238 is the HTH luxR-type domain. A DNA-binding region (H-T-H motif) is located at residues Tyr-197–Gly-216.

The protein belongs to the autoinducer-regulated transcriptional regulatory protein family.

Functions as an OHLL responsive transcriptional regulator that acts in virulence (soft rot disease) through the activation of genes for plant tissue macerating enzymes. The sequence is that of Transcriptional activator protein ExpR (expR) from Dickeya dadantii (strain 3937) (Erwinia chrysanthemi (strain 3937)).